The primary structure comprises 301 residues: tRNA (guanine-N(7)-)-methyltransferase (301 aa).

The tract at residues 1 to 26 is disordered; the sequence is MSETPDSPRPVTPGSQASFGTYGGRP. S-adenosyl-L-methionine-binding residues include E85, E110, N137, and D160. The active site involves D160. Substrate is bound by residues K164 and D196. Positions 244–270 are disordered; sequence APVREGRAPVSTEHTGPNEGVDEEGGW. 280–283 is a binding site for substrate; that stretch reads TSFE.

This sequence belongs to the class I-like SAM-binding methyltransferase superfamily. TrmB family.

The catalysed reaction is guanosine(46) in tRNA + S-adenosyl-L-methionine = N(7)-methylguanosine(46) in tRNA + S-adenosyl-L-homocysteine. It participates in tRNA modification; N(7)-methylguanine-tRNA biosynthesis. Functionally, catalyzes the formation of N(7)-methylguanine at position 46 (m7G46) in tRNA. This chain is tRNA (guanine-N(7)-)-methyltransferase, found in Paenarthrobacter aurescens (strain TC1).